Consider the following 206-residue polypeptide: Flavin prenyltransferase UbiX (206 aa).

Residues 14 to 16 (GAS), T40, 101 to 104 (SMGT), and R136 contribute to the FMN site. Residues Y166 and K182 each contribute to the dimethylallyl phosphate site.

Belongs to the UbiX/PAD1 family.

It catalyses the reaction dimethylallyl phosphate + FMNH2 = prenylated FMNH2 + phosphate. Its function is as follows. Flavin prenyltransferase that catalyzes the synthesis of the prenylated FMN cofactor (prenyl-FMN) for 4-hydroxy-3-polyprenylbenzoic acid decarboxylase UbiD. The prenyltransferase is metal-independent and links a dimethylallyl moiety from dimethylallyl monophosphate (DMAP) to the flavin N5 and C6 atoms of FMN. The polypeptide is Flavin prenyltransferase UbiX (Halalkalibacterium halodurans (strain ATCC BAA-125 / DSM 18197 / FERM 7344 / JCM 9153 / C-125) (Bacillus halodurans)).